The primary structure comprises 499 residues: MTVATGEPADEAAALPGHPQDTYDPEADHECCERVVTNISGLRFETQLKTLAQFPETLLGDPKKRMRFFDPLRNEIFFVRNRPSFDAILYYYQSGGRLRRPVNVPLDIFSEEIRFYELGEEAMEMFREDEGYIKEEERPLPENEFQRQVWLLFEYPESSGPARIIAIVSVMVILISIVSFCLETLPIFRDENEDMHGGGVTFHTYSNSTIGYQQSTSFTDPFFIVETLCIIWFSFEFLVRFFACPSKAGFFTNIMNIIDIVAIIPYFITLGTELAEKPEDAQQGQQAMSLAILRVIRLVRVFRIFKLSRHSKGLQILGQTLKASMRELGLLIFFLFIGVILFSSAVYFAEADERESQFPSIPDAFWWAVVSMTTVGYGDMVPTTIGGKIVGSLCAIAGVLTIALPVPVIVSNFNYFYHRETEGEEQAQYLQVTSCPKIPSSPDLKKSRSASTISKSDYMEIQEGVNNSNEDFREENLKTANCTLANTNYVNITKMLTDV.

The interval 1-27 (MTVATGEPADEAAALPGHPQDTYDPEA) is disordered. Residues 1–125 (MTVATGEPAD…YELGEEAMEM (125 aa)) are tetramerization domain. The Cytoplasmic segment spans residues 1–160 (MTVATGEPAD…LLFEYPESSG (160 aa)). A helical membrane pass occupies residues 161 to 182 (PARIIAIVSVMVILISIVSFCL). Residues 183–221 (ETLPIFRDENEDMHGGGVTFHTYSNSTIGYQQSTSFTDP) lie on the Extracellular side of the membrane. The N-linked (GlcNAc...) asparagine glycan is linked to asparagine 207. The helical transmembrane segment at 222–243 (FFIVETLCIIWFSFEFLVRFFA) threads the bilayer. A lipid anchor (S-palmitoyl cysteine) is attached at cysteine 244. Over 244–254 (CPSKAGFFTNI) the chain is Cytoplasmic. The chain crosses the membrane as a helical span at residues 255-275 (MNIIDIVAIIPYFITLGTELA). Residues 276 to 289 (EKPEDAQQGQQAMS) are Extracellular-facing. Residues 290–310 (LAILRVIRLVRVFRIFKLSRH) traverse the membrane as a helical; Voltage-sensor segment. At 311–325 (SKGLQILGQTLKASM) the chain is on the cytoplasmic side. The segment at 312 to 325 (KGLQILGQTLKASM) is S4-S5 linker. A helical membrane pass occupies residues 326–347 (RELGLLIFFLFIGVILFSSAVY). Residues 348-361 (FAEADERESQFPSI) lie on the Extracellular side of the membrane. An intramembrane region (helical) is located at residues 362 to 373 (PDAFWWAVVSMT). The short motif at 374 to 379 (TVGYGD) is the Selectivity filter element. The stretch at 374-381 (TVGYGDMV) is an intramembrane region. Residues 382 to 388 (PTTIGGK) lie on the Extracellular side of the membrane. A helical membrane pass occupies residues 389-417 (IVGSLCAIAGVLTIALPVPVIVSNFNYFY). The Cytoplasmic portion of the chain corresponds to 418–499 (HRETEGEEQA…VNITKMLTDV (82 aa)). Tyrosine 429 carries the post-translational modification Phosphotyrosine. A phosphoserine mark is found at serine 434, serine 440, serine 441, and serine 449. At tyrosine 458 the chain carries Phosphotyrosine. At serine 468 the chain carries Phosphoserine. A PDZ-binding motif is present at residues 497–499 (TDV).

It belongs to the potassium channel family. A (Shaker) (TC 1.A.1.2) subfamily. Kv1.2/KCNA2 sub-subfamily. In terms of assembly, homotetramer and heterotetramer with other channel-forming alpha subunits, such as KCNA1, KCNA4, KCNA5, KCNA6 and KCNA7. Channel activity is regulated by interaction with the beta subunits, including KCNAB1 and KCNAB2. Identified in a complex with KCNA1 and KCNAB2. Identified in a complex with KCNA5 and KCNAB1. Interacts with the beta subunit KCNAB1. Identified in a complex with KCNA4 and FYN. Interacts with PTK2B. Interacts (via C-terminus) with CTTN. Interacts (via N-terminal cytoplasmic domain) with RHOA (GTP-bound form); this regulates channel activity by reducing location at the cell surface in response to CHRM1 activation. Interacts with DRD2. Interacts with SIGMAR1; cocaine consumption leads to increased interaction. Interacts with ADAM22. Interacts with CNTNAP2. Interacts (via C-terminus) with the PDZ domains of DLG1, DLG2 and DLG4. Interacts with ADAM11. Interacts with LYNX1. In terms of processing, phosphorylated on tyrosine residues; phosphorylation increases in response to ischemia. Phosphorylated on tyrosine residues by activated PTK2B/PYK2. Phosphorylation on tyrosine residues suppresses ion channel activity. Phosphorylated on tyrosine residues in response to CHRM1 activation; this abolishes interaction with CTTN. This is probably due to endocytosis of the phosphorylated channel subunits. Phosphorylated on serine residues in response to increased cAMP levels; phosphorylation is apparently not catalyzed by PKA. Post-translationally, N-glycosylated, with complex, sialylated N-glycans. In terms of tissue distribution, expressed in a wide variety of gastrointestinal smooth muscles. Not expressed in portal vein, renal artery, and uterus.

It is found in the cell membrane. Its subcellular location is the membrane. It localises to the cell projection. The protein resides in the axon. The protein localises to the synapse. It is found in the presynaptic cell membrane. Its subcellular location is the synaptosome. It localises to the endoplasmic reticulum membrane. The protein resides in the dendrite. The protein localises to the lamellipodium membrane. It is found in the cell junction. Its subcellular location is the paranodal septate junction. The enzyme catalyses K(+)(in) = K(+)(out). With respect to regulation, inhibited by 4-aminopyridine (4-AP). Inhibited by dendrotoxin (DTX) and charybdotoxin (CTX), but not by tetraethylammonium (TEA). Inhibited by tityustoxin-K alpha (TsTX-Kalpha), a toxin that is highly specific for KCNA2. Inhibited by maurotoxin. Inhibited by kappaM conotoxins kappaM-RIIIJ and kappaM-RIIIK. In terms of biological role, voltage-gated potassium channel that mediates transmembrane potassium transport in excitable membranes, primarily in the brain and the central nervous system, but also in the cardiovascular system. Prevents aberrant action potential firing and regulates neuronal output. Forms tetrameric potassium-selective channels through which potassium ions pass in accordance with their electrochemical gradient. The channel alternates between opened and closed conformations in response to the voltage difference across the membrane. Can form functional homotetrameric channels and heterotetrameric channels that contain variable proportions of KCNA1, KCNA2, KCNA4, KCNA5, KCNA6, KCNA7, and possibly other family members as well; channel properties depend on the type of alpha subunits that are part of the channel. Channel properties are modulated by cytoplasmic beta subunits that regulate the subcellular location of the alpha subunits and promote rapid inactivation of delayed rectifier potassium channels. In vivo, membranes probably contain a mixture of heteromeric potassium channel complexes, making it difficult to assign currents observed in intact tissues to any particular potassium channel family member. Homotetrameric KCNA2 forms a delayed-rectifier potassium channel that opens in response to membrane depolarization, followed by slow spontaneous channel closure. In contrast, a heteromultimer formed by KCNA2 and KCNA4 shows rapid inactivation. Regulates neuronal excitability and plays a role as pacemaker in the regulation of neuronal action potentials. KCNA2-containing channels play a presynaptic role and prevent hyperexcitability and aberrant action potential firing. Response to toxins that are selective for KCNA2-containing potassium channels suggests that in Purkinje cells, dendritic subthreshold KCNA2-containing potassium channels prevent random spontaneous calcium spikes, suppressing dendritic hyperexcitability without hindering the generation of somatic action potentials, and thereby play an important role in motor coordination. Plays a role in the induction of long-term potentiation of neuron excitability in the CA3 layer of the hippocampus. May function as down-stream effector for G protein-coupled receptors and inhibit GABAergic inputs to basolateral amygdala neurons. May contribute to the regulation of neurotransmitter release, such as gamma-aminobutyric acid (GABA). Contributes to the regulation of the axonal release of the neurotransmitter dopamine. Reduced KCNA2 expression plays a role in the perception of neuropathic pain after peripheral nerve injury, but not acute pain. Plays a role in the regulation of the time spent in non-rapid eye movement (NREM) sleep. This is Potassium voltage-gated channel subfamily A member 2 (KCNA2) from Canis lupus familiaris (Dog).